We begin with the raw amino-acid sequence, 242 residues long: MSKSRLTVFSFVRRFLLRLMVVLAVFWGGGIALFSVAPVPFSAVMVERQVSAWLHGNFRYVAHSDRVSMDQISPWMGLAVIAAEDQTFPEHWGFDVASIEKALAHNERNENRIRGASTISQQTAKNLFLWDGRSWVRKGLEAGLTLGIETVWSKKRILTVYLNIAEFGDGVFGVEAAAQRYFHKPASKLTRSEAALLAAVLPNPLRFKVSAPSGYVRSRQAWILRQMYQLGGEPFMQQHQLD.

A helical membrane pass occupies residues Leu19–Val39.

Belongs to the glycosyltransferase 51 family.

Its subcellular location is the cell inner membrane. The enzyme catalyses [GlcNAc-(1-&gt;4)-Mur2Ac(oyl-L-Ala-gamma-D-Glu-L-Lys-D-Ala-D-Ala)](n)-di-trans,octa-cis-undecaprenyl diphosphate + beta-D-GlcNAc-(1-&gt;4)-Mur2Ac(oyl-L-Ala-gamma-D-Glu-L-Lys-D-Ala-D-Ala)-di-trans,octa-cis-undecaprenyl diphosphate = [GlcNAc-(1-&gt;4)-Mur2Ac(oyl-L-Ala-gamma-D-Glu-L-Lys-D-Ala-D-Ala)](n+1)-di-trans,octa-cis-undecaprenyl diphosphate + di-trans,octa-cis-undecaprenyl diphosphate + H(+). It participates in cell wall biogenesis; peptidoglycan biosynthesis. Peptidoglycan polymerase that catalyzes glycan chain elongation from lipid-linked precursors. The sequence is that of Biosynthetic peptidoglycan transglycosylase from Escherichia coli O157:H7.